Here is a 334-residue protein sequence, read N- to C-terminus: Protein-glutamate methylesterase/protein-glutamine glutaminase 1 (334 aa).

The region spanning 2–120 (NIGIVNDLPL…GAAGDTTKLL (119 aa)) is the Response regulatory domain. 4-aspartylphosphate is present on Asp53. The CheB-type methylesterase domain occupies 145–334 (RAGGGPLIAI…AGELAALARI (190 aa)). Catalysis depends on residues Ser157, His184, and Asp277.

The protein belongs to the CheB family. Phosphorylated by CheA. Phosphorylation of the N-terminal regulatory domain activates the methylesterase activity.

Its subcellular location is the cytoplasm. The catalysed reaction is [protein]-L-glutamate 5-O-methyl ester + H2O = L-glutamyl-[protein] + methanol + H(+). The enzyme catalyses L-glutaminyl-[protein] + H2O = L-glutamyl-[protein] + NH4(+). In terms of biological role, involved in chemotaxis. Part of a chemotaxis signal transduction system that modulates chemotaxis in response to various stimuli. Catalyzes the demethylation of specific methylglutamate residues introduced into the chemoreceptors (methyl-accepting chemotaxis proteins or MCP) by CheR. Also mediates the irreversible deamidation of specific glutamine residues to glutamic acid. In Burkholderia lata (strain ATCC 17760 / DSM 23089 / LMG 22485 / NCIMB 9086 / R18194 / 383), this protein is Protein-glutamate methylesterase/protein-glutamine glutaminase 1.